The sequence spans 183 residues: Photosystem II extrinsic protein V (183 aa).

Residues 1 to 31 (MTFGHCRRASTLRSAFVLGLCGLLLAGCSGA) form the signal peptide. Cysteine 84, cysteine 87, histidine 88, and cysteine 138 together coordinate heme c.

This sequence belongs to the cytochrome c family. PsbV subfamily. As to quaternary structure, PSII is composed of 1 copy each of membrane proteins PsbA, PsbB, PsbC, PsbD, PsbE, PsbF, PsbH, PsbI, PsbJ, PsbK, PsbL, PsbM, PsbT, PsbX, Psb30/Ycf12, peripheral proteins PsbO, CyanoQ (PsbQ), PsbU, PsbV and a large number of cofactors. It forms dimeric complexes. Requires heme c as cofactor.

The protein localises to the cell inner membrane. Probably one of the extrinsic, lumenal subunits of photosystem II (PSII). PSII is a light-driven water plastoquinone oxidoreductase, using light energy to abstract electrons from H(2)O, generating a proton gradient subsequently used for ATP formation. The extrinsic proteins stabilize the structure of photosystem II oxygen-evolving complex (OEC), the ion environment of oxygen evolution and protect the OEC against heat-induced inactivation. Low-potential cytochrome c that plays a role in the OEC of PSII. This is Photosystem II extrinsic protein V (psbV1) from Gloeobacter violaceus (strain ATCC 29082 / PCC 7421).